A 102-amino-acid chain; its full sequence is Putative septation protein SpoVG 1 (102 aa).

This sequence belongs to the SpoVG family.

Could be involved in septation. The sequence is that of Putative septation protein SpoVG 1 from Listeria innocua serovar 6a (strain ATCC BAA-680 / CLIP 11262).